We begin with the raw amino-acid sequence, 465 residues long: Sensor histidine kinase ZraS (465 aa).

Over 1–14 (MSFIRLHKDAAATW) the chain is Cytoplasmic. The helical transmembrane segment at 15–35 (LSRLLPAAIFILVGLFSIMVI) threads the bilayer. The Periplasmic segment spans residues 36 to 202 (RDYGRESAAA…AATQAREWRN (167 aa)). Residues 203–223 (TLIVLSALAAVLLATLLAFFW) traverse the membrane as a helical segment. Residues 224 to 465 (HQRYQRSHRE…WLPVIARQQD (242 aa)) lie on the Cytoplasmic side of the membrane. The Histidine kinase domain maps to 253–461 (GVAHEIRNPL…VFTIWLPVIA (209 aa)). Phosphohistidine; by autocatalysis is present on His-256.

In terms of processing, autophosphorylated.

Its subcellular location is the cell inner membrane. It carries out the reaction ATP + protein L-histidine = ADP + protein N-phospho-L-histidine.. Its activity is regulated as follows. Activity of the ZraS/ZraR two-component system is repressed by the zinc-bound form of ZraP, which probably interacts with the periplasmic region of ZraS. In terms of biological role, part of the Zra signaling pathway, an envelope stress response (ESR) system composed of the periplasmic accessory protein ZraP, the histidine kinase ZraS and the transcriptional regulator ZraR. The ZraPSR system contributes to antibiotic resistance and is important for membrane integrity in the presence of membrane-targeting biocides. ZraS is a member of the two-component regulatory system ZraS/ZraR. Functions as a membrane-associated sensor kinase that phosphorylates ZraR in response to high concentrations of Zn(2+) or Pb(2+) in the medium. The sequence is that of Sensor histidine kinase ZraS from Salmonella typhimurium (strain LT2 / SGSC1412 / ATCC 700720).